The primary structure comprises 214 residues: Large ribosomal subunit protein uL1 (214 aa).

It belongs to the universal ribosomal protein uL1 family. As to quaternary structure, part of the 50S ribosomal subunit.

Functionally, binds directly to 23S rRNA. Probably involved in E site tRNA release. Protein L1 is also a translational repressor protein, it controls the translation of its operon by binding to its mRNA. This is Large ribosomal subunit protein uL1 from Methanoregula boonei (strain DSM 21154 / JCM 14090 / 6A8).